The chain runs to 426 residues: Tyrosine--tRNA ligase (426 aa).

Y38 is an L-tyrosine binding site. Positions P43 to S52 match the 'HIGH' region motif. Y176 and Q180 together coordinate L-tyrosine. The 'KMSKS' region motif lies at K236–T240. K239 contacts ATP. One can recognise an S4 RNA-binding domain in the interval Q359 to K426.

This sequence belongs to the class-I aminoacyl-tRNA synthetase family. TyrS type 1 subfamily. As to quaternary structure, homodimer.

Its subcellular location is the cytoplasm. It catalyses the reaction tRNA(Tyr) + L-tyrosine + ATP = L-tyrosyl-tRNA(Tyr) + AMP + diphosphate + H(+). In terms of biological role, catalyzes the attachment of tyrosine to tRNA(Tyr) in a two-step reaction: tyrosine is first activated by ATP to form Tyr-AMP and then transferred to the acceptor end of tRNA(Tyr). The polypeptide is Tyrosine--tRNA ligase (Aliivibrio fischeri (strain ATCC 700601 / ES114) (Vibrio fischeri)).